Consider the following 120-residue polypeptide: Small ribosomal subunit protein eS24 (120 aa).

Residues 101 to 120 are disordered; sequence RDAGTKQKKGGSKGGQGAKG.

The protein belongs to the eukaryotic ribosomal protein eS24 family.

The protein is Small ribosomal subunit protein eS24 of Saccharolobus islandicus (strain Y.N.15.51 / Yellowstone #2) (Sulfolobus islandicus).